A 68-amino-acid chain; its full sequence is MKPGIHPEYKASTITCACGAVVETRSTRGSFTTDVCSACHPFYTGKHKIMDVAGRVDRFRKKYATAGK.

Positions 16, 18, 36, and 39 each coordinate Zn(2+).

It belongs to the bacterial ribosomal protein bL31 family. Type A subfamily. Part of the 50S ribosomal subunit. It depends on Zn(2+) as a cofactor.

Binds the 23S rRNA. The polypeptide is Large ribosomal subunit protein bL31 (Sorangium cellulosum (strain So ce56) (Polyangium cellulosum (strain So ce56))).